Consider the following 498-residue polypeptide: ATP synthase subunit beta, chloroplastic (498 aa).

ATP is bound at residue 172–179 (GGAGVGKT).

It belongs to the ATPase alpha/beta chains family. F-type ATPases have 2 components, CF(1) - the catalytic core - and CF(0) - the membrane proton channel. CF(1) has five subunits: alpha(3), beta(3), gamma(1), delta(1), epsilon(1). CF(0) has four main subunits: a(1), b(1), b'(1) and c(9-12).

It localises to the plastid. Its subcellular location is the chloroplast thylakoid membrane. It catalyses the reaction ATP + H2O + 4 H(+)(in) = ADP + phosphate + 5 H(+)(out). Its function is as follows. Produces ATP from ADP in the presence of a proton gradient across the membrane. The catalytic sites are hosted primarily by the beta subunits. This is ATP synthase subunit beta, chloroplastic from Aristolochia macrophylla (Dutchman's pipe vine).